We begin with the raw amino-acid sequence, 221 residues long: Protein-L-isoaspartate O-methyltransferase (221 aa).

Ser-70 is an active-site residue.

It belongs to the methyltransferase superfamily. L-isoaspartyl/D-aspartyl protein methyltransferase family.

It is found in the cytoplasm. It catalyses the reaction [protein]-L-isoaspartate + S-adenosyl-L-methionine = [protein]-L-isoaspartate alpha-methyl ester + S-adenosyl-L-homocysteine. Its function is as follows. Catalyzes the methyl esterification of L-isoaspartyl residues in peptides and proteins that result from spontaneous decomposition of normal L-aspartyl and L-asparaginyl residues. It plays a role in the repair and/or degradation of damaged proteins. This Alkalilimnicola ehrlichii (strain ATCC BAA-1101 / DSM 17681 / MLHE-1) protein is Protein-L-isoaspartate O-methyltransferase.